The following is a 313-amino-acid chain: Homoserine O-acetyltransferase (313 aa).

The active-site Acyl-thioester intermediate is Cys-144. The substrate site is built by Lys-165 and Ser-194. Catalysis depends on His-236, which acts as the Proton acceptor. Glu-238 is an active-site residue. Residue Arg-250 coordinates substrate.

The protein belongs to the MetA family.

The protein localises to the cytoplasm. The catalysed reaction is L-homoserine + acetyl-CoA = O-acetyl-L-homoserine + CoA. It participates in amino-acid biosynthesis; L-methionine biosynthesis via de novo pathway; O-acetyl-L-homoserine from L-homoserine: step 1/1. Functionally, transfers an acetyl group from acetyl-CoA to L-homoserine, forming acetyl-L-homoserine. This chain is Homoserine O-acetyltransferase, found in Jannaschia sp. (strain CCS1).